The following is a 447-amino-acid chain: Elongation factor 1-alpha (447 aa).

Residues 5 to 230 enclose the tr-type G domain; sequence KFHINIVVIG…DQINDAKRPS (226 aa). The segment at 14–21 is G1; it reads GHVDSGKS. 14 to 21 is a GTP binding site; that stretch reads GHVDSGKS. K55 is subject to N6,N6-dimethyllysine. The G2 stretch occupies residues 70-74; it reads GITID. N6,N6,N6-trimethyllysine is present on K79. Residues 91-94 form a G3 region; that stretch reads DAPG. GTP contacts are provided by residues 91–95 and 153–156; these read DAPGH and NKMD. A G4 region spans residues 153 to 156; that stretch reads NKMD. An N6,N6,N6-trimethyllysine modification is found at K187. A G5 region spans residues 194-196; the sequence is SGF. The residue at position 261 (K261) is an N6-methyllysine. The residue at position 289 (E289) is a 5-glutamyl glycerylphosphorylethanolamine. An N6,N6,N6-trimethyllysine modification is found at K306. E362 carries the post-translational modification 5-glutamyl glycerylphosphorylethanolamine. K396 carries the post-translational modification N6,N6,N6-trimethyllysine.

The protein belongs to the TRAFAC class translation factor GTPase superfamily. Classic translation factor GTPase family. EF-Tu/EF-1A subfamily. In terms of tissue distribution, was detected in all tissues examined but was most abundant in roots and salt-adapted cultured cells.

Its subcellular location is the cytoplasm. Its function is as follows. This protein promotes the GTP-dependent binding of aminoacyl-tRNA to the A-site of ribosomes during protein biosynthesis. This Nicotiana tabacum (Common tobacco) protein is Elongation factor 1-alpha.